Consider the following 317-residue polypeptide: Orange carotenoid-binding protein (317 aa).

One can recognise an OCP N-terminal domain in the interval 18–169; the sequence is ADVVPATIAR…DMGFTAGKDG (152 aa). Echinenone is bound by residues 34–38, 37–44, 80–83, 107–117, 125–129, 151–161, Y201, 245–250, 273–284, and W288; these read EDQLA, LALIWFAY, TQAM, LGFWYRLGELM, IPAGY, ITVLRNAVVDM, CQNLKL, and VQTPWFGGNVGM.

Belongs to the orange carotenoid-binding protein family. In terms of assembly, monomer. Interacts with the APC core of the phycobilisome (PB), probably at a ratio of 1:1 in a light-independent manner; possibly only OCP-R binds to PBs. Interacts with FRP. Detachment from PBs is accelerated by FPR. 3'-hydroxyechinenone serves as cofactor. Post-translationally, proteolytically cleaved into a red 16.7 kDa form named red carotenoid-binding protein (RCP) which lacks 15 residues from the N-terminus and approximately 150 residues from the C-terminus.

It localises to the cellular thylakoid membrane. Acts as a blue-light photoreceptor and photo-protectant. Essential for inhibiting damaged induced by excess blue-green light via a process known as non-photochemical quenching (NPQ). In the dark or dim light the stable inactive form (OCP-O) is orange, upon illumination with blue-green light it converts to a metastable active red form (OCP-R), inducing energy dissipation, quenching cellular fluorescence via NPQ. One OCP-R molecule is sufficient to quench 1 phycobilisome. More OCP-R accumulates under high-light and low temperature; in the dark OCP-R spontaneously reverts to OCP-O. Reversion of OCP-O is accelerated by FRP. A kinetic study suggests conversion of OCP-O to OCP-R is limited by cis-trans proline isomerization of either Gln224-Pro225 or Pro225-Pro226. This chain is Orange carotenoid-binding protein, found in Synechocystis sp. (strain ATCC 27184 / PCC 6803 / Kazusa).